The primary structure comprises 243 residues: Carboxy-S-adenosyl-L-methionine synthase (243 aa).

S-adenosyl-L-methionine contacts are provided by residues Tyr-40, 65 to 67 (GCS), 90 to 91 (DN), 118 to 119 (DI), Asn-133, and Arg-200.

Belongs to the class I-like SAM-binding methyltransferase superfamily. Cx-SAM synthase family. In terms of assembly, homodimer.

It carries out the reaction prephenate + S-adenosyl-L-methionine = carboxy-S-adenosyl-L-methionine + 3-phenylpyruvate + H2O. Its function is as follows. Catalyzes the conversion of S-adenosyl-L-methionine (SAM) to carboxy-S-adenosyl-L-methionine (Cx-SAM). This chain is Carboxy-S-adenosyl-L-methionine synthase, found in Shewanella halifaxensis (strain HAW-EB4).